A 388-amino-acid chain; its full sequence is Succinate--CoA ligase [ADP-forming] subunit beta (388 aa).

ATP contacts are provided by residues Lys-46, 53–55 (GRG), Glu-99, Cys-102, and Glu-107. Residues Asn-199 and Asp-213 each coordinate Mg(2+). Residues Asn-264 and 321 to 323 (GIV) each bind substrate.

It belongs to the succinate/malate CoA ligase beta subunit family. Heterotetramer of two alpha and two beta subunits. Mg(2+) is required as a cofactor.

It carries out the reaction succinate + ATP + CoA = succinyl-CoA + ADP + phosphate. It catalyses the reaction GTP + succinate + CoA = succinyl-CoA + GDP + phosphate. It functions in the pathway carbohydrate metabolism; tricarboxylic acid cycle; succinate from succinyl-CoA (ligase route): step 1/1. Succinyl-CoA synthetase functions in the citric acid cycle (TCA), coupling the hydrolysis of succinyl-CoA to the synthesis of either ATP or GTP and thus represents the only step of substrate-level phosphorylation in the TCA. The beta subunit provides nucleotide specificity of the enzyme and binds the substrate succinate, while the binding sites for coenzyme A and phosphate are found in the alpha subunit. The chain is Succinate--CoA ligase [ADP-forming] subunit beta from Actinobacillus pleuropneumoniae serotype 5b (strain L20).